The primary structure comprises 228 residues: Endonuclease V (228 aa).

Residues aspartate 36 and aspartate 104 each contribute to the Mg(2+) site.

It belongs to the endonuclease V family. Mg(2+) is required as a cofactor.

It is found in the cytoplasm. The enzyme catalyses Endonucleolytic cleavage at apurinic or apyrimidinic sites to products with a 5'-phosphate.. Functionally, DNA repair enzyme involved in the repair of deaminated bases. Selectively cleaves double-stranded DNA at the second phosphodiester bond 3' to a deoxyinosine leaving behind the intact lesion on the nicked DNA. This chain is Endonuclease V, found in Serratia proteamaculans (strain 568).